Reading from the N-terminus, the 505-residue chain is Maturase K (505 aa).

Belongs to the intron maturase 2 family. MatK subfamily.

Its subcellular location is the plastid. It is found in the chloroplast. In terms of biological role, usually encoded in the trnK tRNA gene intron. Probably assists in splicing its own and other chloroplast group II introns. This chain is Maturase K, found in Morus alba (White mulberry).